A 165-amino-acid polypeptide reads, in one-letter code: Large ribosomal subunit protein uL10 (165 aa).

This sequence belongs to the universal ribosomal protein uL10 family. As to quaternary structure, part of the ribosomal stalk of the 50S ribosomal subunit. The N-terminus interacts with L11 and the large rRNA to form the base of the stalk. The C-terminus forms an elongated spine to which L12 dimers bind in a sequential fashion forming a multimeric L10(L12)X complex.

In terms of biological role, forms part of the ribosomal stalk, playing a central role in the interaction of the ribosome with GTP-bound translation factors. The protein is Large ribosomal subunit protein uL10 of Buchnera aphidicola subsp. Schizaphis graminum (strain Sg).